A 505-amino-acid chain; its full sequence is ATP synthase subunit alpha (505 aa).

Position 171–178 (171–178 (GDRQTGKT)) interacts with ATP.

Belongs to the ATPase alpha/beta chains family. As to quaternary structure, F-type ATPases have 2 components, CF(1) - the catalytic core - and CF(0) - the membrane proton channel. CF(1) has five subunits: alpha(3), beta(3), gamma(1), delta(1), epsilon(1). CF(0) has three main subunits: a(1), b(2) and c(9-12). The alpha and beta chains form an alternating ring which encloses part of the gamma chain. CF(1) is attached to CF(0) by a central stalk formed by the gamma and epsilon chains, while a peripheral stalk is formed by the delta and b chains.

The protein localises to the cell inner membrane. The enzyme catalyses ATP + H2O + 4 H(+)(in) = ADP + phosphate + 5 H(+)(out). Produces ATP from ADP in the presence of a proton gradient across the membrane. The alpha chain is a regulatory subunit. This Campylobacter concisus (strain 13826) protein is ATP synthase subunit alpha.